An 82-amino-acid polypeptide reads, in one-letter code: Cytochrome c-551 (82 aa).

Heme c-binding residues include Cys-12, Cys-15, His-16, and Met-61.

Post-translationally, binds 1 heme c group covalently per subunit.

Functionally, this is a prokaryotic monoheme cytochrome, unreactive with mitochondrial cytochrome C oxidase or reductase. It functions in nitrite and nitrate respiration in Pseudomonas, but it is also found in other bacteria. The chain is Cytochrome c-551 from Ectopseudomonas mendocina (Pseudomonas mendocina).